The primary structure comprises 108 residues: Nucleoid-associated protein BARBAKC583_1239 (108 aa).

The protein belongs to the YbaB/EbfC family. As to quaternary structure, homodimer.

It localises to the cytoplasm. The protein localises to the nucleoid. Functionally, binds to DNA and alters its conformation. May be involved in regulation of gene expression, nucleoid organization and DNA protection. This chain is Nucleoid-associated protein BARBAKC583_1239, found in Bartonella bacilliformis (strain ATCC 35685 / KC583 / Herrer 020/F12,63).